The following is a 151-amino-acid chain: Large ribosomal subunit protein uL22 (151 aa).

Over residues 1-18 (MARINYSINADPENTSKA) the composition is skewed to polar residues. The interval 1 to 23 (MARINYSINADPENTSKAMGSEL) is disordered.

This sequence belongs to the universal ribosomal protein uL22 family. As to quaternary structure, part of the 50S ribosomal subunit.

Its function is as follows. This protein binds specifically to 23S rRNA. It makes multiple contacts with different domains of the 23S rRNA in the assembled 50S subunit and ribosome. In terms of biological role, the globular domain of the protein is located near the polypeptide exit tunnel on the outside of the subunit, while an extended beta-hairpin is found that lines the wall of the exit tunnel in the center of the 70S ribosome. This chain is Large ribosomal subunit protein uL22, found in Methanosarcina mazei (strain ATCC BAA-159 / DSM 3647 / Goe1 / Go1 / JCM 11833 / OCM 88) (Methanosarcina frisia).